A 255-amino-acid polypeptide reads, in one-letter code: Imidazole glycerol phosphate synthase subunit HisF (255 aa).

Catalysis depends on residues Asp11 and Asp130.

Belongs to the HisA/HisF family. Heterodimer of HisH and HisF.

Its subcellular location is the cytoplasm. The catalysed reaction is 5-[(5-phospho-1-deoxy-D-ribulos-1-ylimino)methylamino]-1-(5-phospho-beta-D-ribosyl)imidazole-4-carboxamide + L-glutamine = D-erythro-1-(imidazol-4-yl)glycerol 3-phosphate + 5-amino-1-(5-phospho-beta-D-ribosyl)imidazole-4-carboxamide + L-glutamate + H(+). It participates in amino-acid biosynthesis; L-histidine biosynthesis; L-histidine from 5-phospho-alpha-D-ribose 1-diphosphate: step 5/9. IGPS catalyzes the conversion of PRFAR and glutamine to IGP, AICAR and glutamate. The HisF subunit catalyzes the cyclization activity that produces IGP and AICAR from PRFAR using the ammonia provided by the HisH subunit. In Rhodopseudomonas palustris (strain HaA2), this protein is Imidazole glycerol phosphate synthase subunit HisF.